The following is a 348-amino-acid chain: Protein RecA (348 aa).

65–72 lines the ATP pocket; it reads GPESSGKT.

It belongs to the RecA family.

The protein localises to the cytoplasm. Can catalyze the hydrolysis of ATP in the presence of single-stranded DNA, the ATP-dependent uptake of single-stranded DNA by duplex DNA, and the ATP-dependent hybridization of homologous single-stranded DNAs. It interacts with LexA causing its activation and leading to its autocatalytic cleavage. The chain is Protein RecA from Enterococcus gallinarum.